The sequence spans 608 residues: Glutamine--fructose-6-phosphate aminotransferase [isomerizing] (608 aa).

Cys2 acts as the Nucleophile; for GATase activity in catalysis. Residues 2-217 enclose the Glutamine amidotransferase type-2 domain; the sequence is CGIVGIVGNQ…DGDWAVIGKT (216 aa). 2 consecutive SIS domains span residues 281-422 and 456-598; these read ISDA…ARGT and LSRE…VDQP. Lys603 acts as the For Fru-6P isomerization activity in catalysis.

Homodimer.

It is found in the cytoplasm. The catalysed reaction is D-fructose 6-phosphate + L-glutamine = D-glucosamine 6-phosphate + L-glutamate. In terms of biological role, catalyzes the first step in hexosamine metabolism, converting fructose-6P into glucosamine-6P using glutamine as a nitrogen source. The protein is Glutamine--fructose-6-phosphate aminotransferase [isomerizing] of Rhizobium meliloti (strain 1021) (Ensifer meliloti).